The chain runs to 311 residues: Olfactory receptor 5M8 (311 aa).

Over 1–24 the chain is Extracellular; the sequence is MRRNCTLVTEFILLGLTSRRELQI. An N-linked (GlcNAc...) asparagine glycan is attached at N4. Residues 25–45 traverse the membrane as a helical segment; that stretch reads LLFTLFLAIYMVTVAGNLGMI. Topologically, residues 46 to 53 are cytoplasmic; it reads VLIQANAW. The helical transmembrane segment at 54–74 threads the bilayer; sequence LHMPMYFFLSHLSFVDLCFSS. Over 75–98 the chain is Extracellular; sequence NVTPKMLEIFLSEKKSISYPACLV. C96 and C188 are oxidised to a cystine. Residues 99–119 form a helical membrane-spanning segment; that stretch reads QCYLFIALVHVEIYILAVMAF. At 120–138 the chain is on the cytoplasmic side; it reads DRYMAICNPLLYGSRMSKS. Residues 139 to 159 traverse the membrane as a helical segment; sequence VCSFLITVPYVYGALTGLMET. Over 160 to 195 the chain is Extracellular; sequence MWTYNLAFCGPNEINHFYCADPPLIKLACSDTYNKE. Residues 196–216 traverse the membrane as a helical segment; the sequence is LSMFIVAGWNLSFSLFIICIS. Residues 217–236 lie on the Cytoplasmic side of the membrane; that stretch reads YLYIFPAILKIRSTEGRQKA. The chain crosses the membrane as a helical span at residues 237 to 257; it reads FSTCGSHLTAVTIFYATLFFM. Residues 258–270 lie on the Extracellular side of the membrane; the sequence is YLRPPSKESVEQG. The chain crosses the membrane as a helical span at residues 271–291; sequence KMVAVFYTTVIPMLNLIIYSL. The Cytoplasmic portion of the chain corresponds to 292 to 311; that stretch reads RNKNVKEALIKELSMKIYFS.

The protein belongs to the G-protein coupled receptor 1 family.

Its subcellular location is the cell membrane. Odorant receptor. This is Olfactory receptor 5M8 (OR5M8) from Homo sapiens (Human).